The primary structure comprises 616 residues: Chaperone protein HscA (616 aa).

The protein belongs to the heat shock protein 70 family.

Its function is as follows. Chaperone involved in the maturation of iron-sulfur cluster-containing proteins. Has a low intrinsic ATPase activity which is markedly stimulated by HscB. Involved in the maturation of IscU. This chain is Chaperone protein HscA, found in Shigella boydii serotype 18 (strain CDC 3083-94 / BS512).